The primary structure comprises 123 residues: Holo-[acyl-carrier-protein] synthase (123 aa).

2 residues coordinate Mg(2+): Asp-8 and Glu-55.

Belongs to the P-Pant transferase superfamily. AcpS family. Mg(2+) serves as cofactor.

Its subcellular location is the cytoplasm. It catalyses the reaction apo-[ACP] + CoA = holo-[ACP] + adenosine 3',5'-bisphosphate + H(+). Its function is as follows. Transfers the 4'-phosphopantetheine moiety from coenzyme A to a Ser of acyl-carrier-protein. This is Holo-[acyl-carrier-protein] synthase from Solidesulfovibrio magneticus (strain ATCC 700980 / DSM 13731 / RS-1) (Desulfovibrio magneticus).